We begin with the raw amino-acid sequence, 1488 residues long: Chromosome partition protein MukB (1488 aa).

34–41 (GGNGAGKS) contacts ATP. Coiled-coil stretches lie at residues 326–418 (LEAD…QYNQ), 444–472 (LDTFQAKEQEATEKLLSLEQKMSVAQTAH), and 509–602 (RHLA…QRAP). Positions 666–783 (PGGAEDQRLN…SLPIFGRAAR (118 aa)) are flexible hinge. Coiled coils occupy residues 835–923 (EAEI…AKLE), 977–1116 (EMLS…AKAG), and 1209–1265 (VEAI…LQSV).

It belongs to the SMC family. MukB subfamily. As to quaternary structure, homodimerization via its hinge domain. Binds to DNA via its C-terminal region. Interacts, and probably forms a ternary complex, with MukE and MukF via its C-terminal region. The complex formation is stimulated by calcium or magnesium. Interacts with tubulin-related protein FtsZ.

It is found in the cytoplasm. The protein localises to the nucleoid. Functionally, plays a central role in chromosome condensation, segregation and cell cycle progression. Functions as a homodimer, which is essential for chromosome partition. Involved in negative DNA supercoiling in vivo, and by this means organize and compact chromosomes. May achieve or facilitate chromosome segregation by condensation DNA from both sides of a centrally located replisome during cell division. This Salmonella paratyphi B (strain ATCC BAA-1250 / SPB7) protein is Chromosome partition protein MukB.